Reading from the N-terminus, the 309-residue chain is uncharacterized protein (309 aa).

Positions 1–32 (MTGTAPVSRRQYLGTAGAIIGTTAGCLTGADA) form a signal peptide, tat-type signal.

This sequence belongs to the bacterial solute-binding protein 1 family. WtpA subfamily. Post-translationally, predicted to be exported by the Tat system. The position of the signal peptide cleavage has not been experimentally proven.

This is an uncharacterized protein from Halobacterium salinarum (strain ATCC 700922 / JCM 11081 / NRC-1) (Halobacterium halobium).